Here is a 209-residue protein sequence, read N- to C-terminus: FMN-dependent NADH:quinone oxidoreductase (209 aa).

FMN-binding positions include S9 and 15–17 (SNS).

Belongs to the azoreductase type 1 family. Homodimer. Requires FMN as cofactor.

It carries out the reaction 2 a quinone + NADH + H(+) = 2 a 1,4-benzosemiquinone + NAD(+). The catalysed reaction is N,N-dimethyl-1,4-phenylenediamine + anthranilate + 2 NAD(+) = 2-(4-dimethylaminophenyl)diazenylbenzoate + 2 NADH + 2 H(+). Functionally, quinone reductase that provides resistance to thiol-specific stress caused by electrophilic quinones. Also exhibits azoreductase activity. Catalyzes the reductive cleavage of the azo bond in aromatic azo compounds to the corresponding amines. The polypeptide is FMN-dependent NADH:quinone oxidoreductase (Bordetella parapertussis (strain 12822 / ATCC BAA-587 / NCTC 13253)).